We begin with the raw amino-acid sequence, 149 residues long: 2S seed storage albumin protein (149 aa).

A signal peptide spans 1 to 22 (MKLFIILATATLLIAATQATYP). Intrachain disulfides connect Cys38–Cys98, Cys52–Cys87, Cys88–Cys133, and Cys100–Cys140. The tract at residues 121 to 128 (EGVRDLKE) is igE-binding.

This sequence belongs to the 2S seed storage albumins family. Expressed in seeds (at protein level).

In terms of biological role, seed storage protein. The polypeptide is 2S seed storage albumin protein (Fagopyrum esculentum (Common buckwheat)).